Reading from the N-terminus, the 1135-residue chain is MATSYSANNGQNEEYTFDAFEDGSSKLVGEQQLTKLNQFAVDYAQQIWKIEEALDETLNEVWDINIDPVSIYNKPHEQLDLIELVKTDHKIFNKVILVFSSICNQTRILKETAESKFYSPLTVFGEITGESSEGDVQIEVGKLLPFMIDLSAFVNRCYSLIRNIISQFASIYQSQKNIHTQFFKNVHLQAVYYSMIDIFSVLINLDSIITQNTALDSSWGRYLRMVKSVKQEPNKYSVSGEEDKLWQLEKLLLSLKGQLLEGFIFQSCIQQEFDFPGVIDVKGNKVLKAEFQYNVKVLWSMFGTKIMDSSELNLRERFPGFMGLYAFYIALFKDITDKSFFKQVWEVTKRVPMVSINVNVFWFPADFIQQLMPGMIKIVGSTFNHMEIRRDYLRNVDKEFSGRVKSYYLQVSRWMVRMESSQTRGGTLWDVSLSKVGQIIQGVQLSYHISHLLKTMIGLHMHLTAPLKSSDVRKLFQCAEMLKSIENTFHRRSAMISAHISMMVQQLTDIINEKLNVVRSKYAGRSNYSEIELDVIVALSLCSDLLCGVATNERITVVRLCLNVIYQSNILKENDIEELRLHIKRLEFISDIGKIVKASCDCSILFWSRDLFPTYLQFLYQNPSQATSLQYTLTGLKDVVSVLDKAIHVDNAKQRLIDVYRNEMEEMIDKNIIQPLGKDVETDLRLHIHAFLNIEEKDPFKTGIKEFGKFLELKPLRFFDRTIDIKSRISHYLDQTFYNLNTVALFDWKTYSEMRNMAFYKYGLQLLEVHLPGSTLEQGLDVLEIMRNIHIFVSRYNYNLNNQIFIQRSSNSKTLNTINITHISNSIRTHGSGIMNTTINFAYRFLVQKFSIFSEFLFDDQIKSKLYKNIKYFRENKEQLNNMYPSELVTELERDIRQLGVSETGLTFLDHFRLLITHIGNAMGYIRLVRSGGLHYCSNAIKFVPDLKKIPKFQDLTSKDALSPETIQASTNLDSIIHNLSNNLSEGTEYFKMLVNVFATEFRNIANQHLKNFYIIVPALASNYIDHMINSKDKLFKKSKAIGAEALLFTDDGFAIGLAYILKLLDQNKDFDSLHWFDRIQLKCETDQKRMLAEANAKGIKEDQNHLAIKKIQNFQQEYELFKYSFSGSRIFFKD.

The residue at position 2 (Ala-2) is an N-acetylalanine.

This sequence belongs to the SWIP family. In terms of assembly, probable component of the WASH complex.

The sequence is that of WASH complex subunit 4 from Dictyostelium discoideum (Social amoeba).